The chain runs to 122 residues: Large ribosomal subunit protein uL14 (122 aa).

The protein belongs to the universal ribosomal protein uL14 family. In terms of assembly, part of the 50S ribosomal subunit. Forms a cluster with proteins L3 and L19. In the 70S ribosome, L14 and L19 interact and together make contacts with the 16S rRNA in bridges B5 and B8.

Binds to 23S rRNA. Forms part of two intersubunit bridges in the 70S ribosome. This is Large ribosomal subunit protein uL14 from Mesorhizobium japonicum (strain LMG 29417 / CECT 9101 / MAFF 303099) (Mesorhizobium loti (strain MAFF 303099)).